The chain runs to 257 residues: Imidazole glycerol phosphate synthase subunit HisF (257 aa).

Active-site residues include Asp11 and Asp130.

Belongs to the HisA/HisF family. Heterodimer of HisH and HisF.

It localises to the cytoplasm. The catalysed reaction is 5-[(5-phospho-1-deoxy-D-ribulos-1-ylimino)methylamino]-1-(5-phospho-beta-D-ribosyl)imidazole-4-carboxamide + L-glutamine = D-erythro-1-(imidazol-4-yl)glycerol 3-phosphate + 5-amino-1-(5-phospho-beta-D-ribosyl)imidazole-4-carboxamide + L-glutamate + H(+). Its pathway is amino-acid biosynthesis; L-histidine biosynthesis; L-histidine from 5-phospho-alpha-D-ribose 1-diphosphate: step 5/9. In terms of biological role, IGPS catalyzes the conversion of PRFAR and glutamine to IGP, AICAR and glutamate. The HisF subunit catalyzes the cyclization activity that produces IGP and AICAR from PRFAR using the ammonia provided by the HisH subunit. This is Imidazole glycerol phosphate synthase subunit HisF from Shewanella frigidimarina (strain NCIMB 400).